The chain runs to 120 residues: Flagellar protein FliT (120 aa).

Residues 1 to 50 (MNDFISSLNNWQALYALSNTMLSLANSGQWDELIEQEVKYVTLVEAIARN) form a required for homodimerization region. Positions 59–97 (FQEKARELLTKVLANEAALKIKLQARMEELRVLIEQNGN) are fliD binding.

Belongs to the FliT family. As to quaternary structure, homodimer. Interacts with FliD and FlhC.

It localises to the cytoplasm. The protein localises to the cytosol. In terms of biological role, dual-function protein that regulates the transcription of class 2 flagellar operons and that also acts as an export chaperone for the filament-capping protein FliD. As a transcriptional regulator, acts as an anti-FlhDC factor; it directly binds FlhC, thus inhibiting the binding of the FlhC/FlhD complex to class 2 promoters, resulting in decreased expression of class 2 flagellar operons. As a chaperone, effects FliD transition to the membrane by preventing its premature polymerization, and by directing it to the export apparatus. The polypeptide is Flagellar protein FliT (Cronobacter sakazakii (strain ATCC BAA-894) (Enterobacter sakazakii)).